Consider the following 340-residue polypeptide: Dihydroorotate dehydrogenase (quinone) (340 aa).

FMN contacts are provided by residues 65–69 and T89; that span reads AGLDK. K69 is a binding site for substrate. 114-118 contributes to the substrate binding site; the sequence is NRMGF. N142 and N175 together coordinate FMN. Position 175 (N175) interacts with substrate. The active-site Nucleophile is S178. Position 180 (N180) interacts with substrate. The FMN site is built by K220 and T248. Position 249 to 250 (249 to 250) interacts with substrate; that stretch reads NT. FMN contacts are provided by residues G271, G300, and 321-322; that span reads YT.

Belongs to the dihydroorotate dehydrogenase family. Type 2 subfamily. As to quaternary structure, monomer. FMN serves as cofactor.

Its subcellular location is the cell membrane. The enzyme catalyses (S)-dihydroorotate + a quinone = orotate + a quinol. The protein operates within pyrimidine metabolism; UMP biosynthesis via de novo pathway; orotate from (S)-dihydroorotate (quinone route): step 1/1. In terms of biological role, catalyzes the conversion of dihydroorotate to orotate with quinone as electron acceptor. In Paraburkholderia xenovorans (strain LB400), this protein is Dihydroorotate dehydrogenase (quinone).